Consider the following 329-residue polypeptide: MKKWGVGFTLLLASTSILAKDIQLLNVSYDPTRELYEQYNKAFSAHWKQETGDNVVIRQSHGGSGKQATSVINGIEADVVTLALAYDVDAIAERGRIDKNWIKRLPDNSAPYTSTIVFLVRKGNPKQIHDWNDLIKPGVSVITPNPKSSGGARWNYLAAWGYALHHNNNDQAKAQDFVKALFKNVEVLDSGARGSTNTFVERGIGDVLIAWENEALLATNELGKDKFEIVTPSESILAEPTVSVVDKVVEKKDTKAVAEAYLKYLYSPEGQEIAAKNFYRPRDADVAKKYDDAFPKLKLFTIDEVFGGWAKAQKDHFANGGTFDQISKR.

The N-terminal stretch at 1-19 (MKKWGVGFTLLLASTSILA) is a signal peptide.

The protein belongs to the prokaryotic sulfate-binding protein family.

It is found in the periplasm. This protein specifically binds sulfate and is involved in its transmembrane transport. The sequence is that of Sulfate-binding protein (sbp) from Salmonella typhimurium (strain LT2 / SGSC1412 / ATCC 700720).